The primary structure comprises 275 residues: Shikimate dehydrogenase (NADP(+)) (275 aa).

Shikimate is bound by residues 19-21 (SIS) and Thr-66. Lys-70 acts as the Proton acceptor in catalysis. Shikimate-binding residues include Asn-91 and Asp-106. NADP(+) contacts are provided by residues 129–133 (GAGGA), 153–158 (NRTYGR), and Ile-219. Residue Tyr-221 participates in shikimate binding. Residue Gly-242 coordinates NADP(+).

The protein belongs to the shikimate dehydrogenase family. Homodimer.

The catalysed reaction is shikimate + NADP(+) = 3-dehydroshikimate + NADPH + H(+). It participates in metabolic intermediate biosynthesis; chorismate biosynthesis; chorismate from D-erythrose 4-phosphate and phosphoenolpyruvate: step 4/7. Its function is as follows. Involved in the biosynthesis of the chorismate, which leads to the biosynthesis of aromatic amino acids. Catalyzes the reversible NADPH linked reduction of 3-dehydroshikimate (DHSA) to yield shikimate (SA). The polypeptide is Shikimate dehydrogenase (NADP(+)) (Dictyoglomus thermophilum (strain ATCC 35947 / DSM 3960 / H-6-12)).